The following is a 243-amino-acid chain: 1-(5-phosphoribosyl)-5-[(5-phosphoribosylamino)methylideneamino] imidazole-4-carboxamide isomerase (243 aa).

Residue Asp8 is the Proton acceptor of the active site. Asp130 acts as the Proton donor in catalysis.

The protein belongs to the HisA/HisF family.

The protein resides in the cytoplasm. The catalysed reaction is 1-(5-phospho-beta-D-ribosyl)-5-[(5-phospho-beta-D-ribosylamino)methylideneamino]imidazole-4-carboxamide = 5-[(5-phospho-1-deoxy-D-ribulos-1-ylimino)methylamino]-1-(5-phospho-beta-D-ribosyl)imidazole-4-carboxamide. It participates in amino-acid biosynthesis; L-histidine biosynthesis; L-histidine from 5-phospho-alpha-D-ribose 1-diphosphate: step 4/9. This chain is 1-(5-phosphoribosyl)-5-[(5-phosphoribosylamino)methylideneamino] imidazole-4-carboxamide isomerase, found in Cellvibrio japonicus (strain Ueda107) (Pseudomonas fluorescens subsp. cellulosa).